Reading from the N-terminus, the 343-residue chain is SET and MYND domain-containing protein DDB_G0292454 (343 aa).

The region spanning 77 to 307 (EPFISYPSII…PGDEITISYT (231 aa)) is the SET domain. Zn(2+) contacts are provided by Cys-93, Cys-96, Cys-111, Cys-114, Cys-120, Cys-124, His-133, and Cys-137. The segment at 93-137 (CNHCLKEIKKEEEEIKQECEECKVYKYCSIECKEKSSIEYHSVLC) adopts an MYND-type zinc-finger fold.

The protein belongs to the class V-like SAM-binding methyltransferase superfamily.

Probable methyltransferase. In Dictyostelium discoideum (Social amoeba), this protein is SET and MYND domain-containing protein DDB_G0292454.